The chain runs to 711 residues: Ribosomal RNA large subunit methyltransferase K/L (711 aa).

Positions 42–153 (DAQRAVLWSR…KGRATISVDL (112 aa)) constitute a THUMP domain.

It belongs to the methyltransferase superfamily. RlmKL family.

The protein localises to the cytoplasm. It carries out the reaction guanosine(2445) in 23S rRNA + S-adenosyl-L-methionine = N(2)-methylguanosine(2445) in 23S rRNA + S-adenosyl-L-homocysteine + H(+). It catalyses the reaction guanosine(2069) in 23S rRNA + S-adenosyl-L-methionine = N(2)-methylguanosine(2069) in 23S rRNA + S-adenosyl-L-homocysteine + H(+). Its function is as follows. Specifically methylates the guanine in position 2445 (m2G2445) and the guanine in position 2069 (m7G2069) of 23S rRNA. In Xanthomonas campestris pv. campestris (strain B100), this protein is Ribosomal RNA large subunit methyltransferase K/L.